The chain runs to 282 residues: NADPH-dependent 7-cyano-7-deazaguanine reductase (282 aa).

88–90 (IES) is a binding site for substrate. 90 to 91 (SK) is an NADPH binding site. The active-site Thioimide intermediate is the Cys-190. Asp-197 functions as the Proton donor in the catalytic mechanism. 229–230 (HE) is a binding site for substrate. An NADPH-binding site is contributed by 258 to 259 (RG).

Belongs to the GTP cyclohydrolase I family. QueF type 2 subfamily. Homodimer.

It localises to the cytoplasm. The catalysed reaction is 7-aminomethyl-7-carbaguanine + 2 NADP(+) = 7-cyano-7-deazaguanine + 2 NADPH + 3 H(+). It functions in the pathway tRNA modification; tRNA-queuosine biosynthesis. Its function is as follows. Catalyzes the NADPH-dependent reduction of 7-cyano-7-deazaguanine (preQ0) to 7-aminomethyl-7-deazaguanine (preQ1). The chain is NADPH-dependent 7-cyano-7-deazaguanine reductase from Shigella dysenteriae serotype 1 (strain Sd197).